We begin with the raw amino-acid sequence, 1070 residues long: DNA-directed RNA polymerase subunit beta (1070 aa).

It belongs to the RNA polymerase beta chain family. As to quaternary structure, in plastids the minimal PEP RNA polymerase catalytic core is composed of four subunits: alpha, beta, beta', and beta''. When a (nuclear-encoded) sigma factor is associated with the core the holoenzyme is formed, which can initiate transcription.

It is found in the plastid. The protein resides in the chloroplast. It catalyses the reaction RNA(n) + a ribonucleoside 5'-triphosphate = RNA(n+1) + diphosphate. Its function is as follows. DNA-dependent RNA polymerase catalyzes the transcription of DNA into RNA using the four ribonucleoside triphosphates as substrates. This Phaseolus vulgaris (Kidney bean) protein is DNA-directed RNA polymerase subunit beta.